The chain runs to 388 residues: Succinate--CoA ligase [ADP-forming] subunit beta (388 aa).

The ATP-grasp domain maps to 9-245 (KELLASYGLP…KSQENERELK (237 aa)). Residues K46, 53–55 (GRG), E100, Y103, and E108 each bind ATP. Mg(2+) contacts are provided by N200 and D214. Substrate is bound by residues N265 and 322–324 (GIV).

It belongs to the succinate/malate CoA ligase beta subunit family. As to quaternary structure, heterotetramer of two alpha and two beta subunits. Mg(2+) is required as a cofactor.

The catalysed reaction is succinate + ATP + CoA = succinyl-CoA + ADP + phosphate. It catalyses the reaction GTP + succinate + CoA = succinyl-CoA + GDP + phosphate. It functions in the pathway carbohydrate metabolism; tricarboxylic acid cycle; succinate from succinyl-CoA (ligase route): step 1/1. In terms of biological role, succinyl-CoA synthetase functions in the citric acid cycle (TCA), coupling the hydrolysis of succinyl-CoA to the synthesis of either ATP or GTP and thus represents the only step of substrate-level phosphorylation in the TCA. The beta subunit provides nucleotide specificity of the enzyme and binds the substrate succinate, while the binding sites for coenzyme A and phosphate are found in the alpha subunit. This Neisseria gonorrhoeae (strain NCCP11945) protein is Succinate--CoA ligase [ADP-forming] subunit beta.